The following is a 634-amino-acid chain: GTP-binding protein 4 (634 aa).

Ala-2 carries the N-acetylalanine modification. Lys-103 carries the N6-acetyllysine; alternate modification. Lys-103 is covalently cross-linked (Glycyl lysine isopeptide (Lys-Gly) (interchain with G-Cter in SUMO2); alternate). Ser-122 carries the phosphoserine modification. The OBG-type G domain occupies 169–340 (RTLLLCGYPN…VKTEACDRLL (172 aa)). GTP contacts are provided by residues 175–182 (GYPNVGKS), 221–225 (DTPGI), and 289–292 (NKCD). Residue Lys-332 forms a Glycyl lysine isopeptide (Lys-Gly) (interchain with G-Cter in SUMO2) linkage. Residues Ser-468, Ser-470, and Ser-472 each carry the phosphoserine modification. Residues 495 to 517 (ILESKEKNTQGPRMPRTAKKVQR) are disordered. The residue at position 522 (Lys-522) is an N6-acetyllysine. The segment at 529-634 (VDMDDKDDAH…KRKAGKKDRR (106 aa)) is disordered. Lys-534 participates in a covalent cross-link: Glycyl lysine isopeptide (Lys-Gly) (interchain with G-Cter in SUMO2). Over residues 544-554 (RRSRSITRKRK) the composition is skewed to basic residues. Phosphoserine is present on Ser-558. Polar residues predominate over residues 560–572 (PPSSVARSGSCSR). Residues 573 to 585 (TPRDVSGLRDVKM) are compositionally biased toward basic and acidic residues. Positions 586–604 (VKKAKTMMKNAQKKMNRLG) are enriched in basic residues. Residues 605-618 (KKGEADRHVFDMKP) are compositionally biased toward basic and acidic residues. Over residues 619–634 (KHLLSGKRKAGKKDRR) the composition is skewed to basic residues.

Belongs to the TRAFAC class OBG-HflX-like GTPase superfamily. OBG GTPase family. NOG subfamily. Associates with pre-60S ribosomal particles. Interacts with MINAS-60 (product of an alternative open reading frame of RBM10).

It localises to the nucleus. Its subcellular location is the nucleolus. In terms of biological role, involved in the biogenesis of the 60S ribosomal subunit. Acts as a TP53 repressor, preventing TP53 stabilization and cell cycle arrest. The chain is GTP-binding protein 4 from Homo sapiens (Human).